The chain runs to 180 residues: Inner membrane-spanning protein YciB (180 aa).

Helical transmembrane passes span 4–24 (LLSE…GGGI), 25–45 (QSAT…CYII), 52–72 (LSII…ISGD), 76–96 (IKIK…TSGI), 118–138 (ITLS…NEIV), and 150–170 (FKVF…LPLL).

The protein belongs to the YciB family.

The protein resides in the cell inner membrane. Plays a role in cell envelope biogenesis, maintenance of cell envelope integrity and membrane homeostasis. In Rickettsia bellii (strain RML369-C), this protein is Inner membrane-spanning protein YciB.